We begin with the raw amino-acid sequence, 1828 residues long: Unconventional myosin-Va (1828 aa).

Ala2 carries the N-acetylalanine modification. Residues 8–60 (TKFARVWIPDPEEVWKSAELLKDYKPGDKVLLLHLEEGKDLEYRLDPKTSELP) enclose the Myosin N-terminal SH3-like domain. One can recognise a Myosin motor domain in the interval 69 to 763 (VGENDLTALS…QVAYLEKLRA (695 aa)). Residue 163–170 (GESGAGKT) coordinates ATP. The disordered stretch occupies residues 599–633 (ISPTSATSSGRTPLTRVPVKPTKGRPGQTAKEHKK). At Ser600 the chain carries Phosphoserine. The span at 600–610 (SPTSATSSGRT) shows a compositional bias: polar residues. Residues 643–665 (LHLLMETLNATTPHYVRCIKPND) form an actin-binding region. 6 IQ domains span residues 766-788 (LRAA…RYLC), 789-813 (MQRA…KFLR), 814-836 (RTKA…KYKI), 837-861 (RRAA…RKIL), 862-884 (REHK…HYKR), and 885-914 (TMKA…EARS). 2 coiled-coil regions span residues 914–1239 (SVER…EVNA) and 1314–1418 (GLKE…ELEV). Phosphothreonine is present on Thr1032. The tract at residues 1105 to 1147 (VPKPGHKRTDSTHSSNESEYTFSSEFAETEDIAPRTEEPTEKK) is disordered. Polar residues predominate over residues 1116 to 1130 (THSSNESEYTFSSEF). The span at 1136–1147 (IAPRTEEPTEKK) shows a compositional bias: basic and acidic residues. Residues Ser1425 and Ser1625 each carry the phosphoserine modification. Positions 1507-1783 (TSTINSIKKV…IRTIQVRLRD (277 aa)) constitute a Dilute domain. Thr1733 carries the phosphothreonine modification.

This sequence belongs to the TRAFAC class myosin-kinesin ATPase superfamily. Myosin family. May be a homodimer, which associates with multiple calmodulin or myosin light chains. Interacts with RIPL2, the interaction is required for its role in dendrite formation. Interacts with MLPH. Interacts with SYTL4. Interacts with MYRIP. Interacts with RAB10; mediates the transport to the plasma membrane of SLC2A4/GLUT4 storage vesicles. Interacts with FMR1; this interaction occurs in association with polyribosome.

It carries out the reaction ATP + H2O = ADP + phosphate + H(+). Processive actin-based motor that can move in large steps approximating the 36-nm pseudo-repeat of the actin filament. Can hydrolyze ATP in the presence of actin, which is essential for its function as a motor protein. Involved in melanosome transport. Also mediates the transport of vesicles to the plasma membrane. May also be required for some polarization process involved in dendrite formation. This is Unconventional myosin-Va (Myo5a) from Rattus norvegicus (Rat).